A 141-amino-acid polypeptide reads, in one-letter code: Deoxyuridine 5'-triphosphate nucleotidohydrolase (141 aa).

Belongs to the dUTPase family. Mg(2+) is required as a cofactor.

It catalyses the reaction dUTP + H2O = dUMP + diphosphate + H(+). It functions in the pathway pyrimidine metabolism; dUMP biosynthesis; dUMP from dCTP (dUTP route): step 2/2. This enzyme is involved in nucleotide metabolism: it produces dUMP, the immediate precursor of thymidine nucleotides and it decreases the intracellular concentration of dUTP so that uracil cannot be incorporated into DNA. This chain is Deoxyuridine 5'-triphosphate nucleotidohydrolase, found in Chlorella (PBCV-1).